We begin with the raw amino-acid sequence, 123 residues long: Small ribosomal subunit protein uS13 (123 aa).

A disordered region spans residues 97 to 123 (PVRGQRTHTNAKTRKGRSKLPVAAKKK).

The protein belongs to the universal ribosomal protein uS13 family. In terms of assembly, part of the 30S ribosomal subunit. Forms a loose heterodimer with protein S19. Forms two bridges to the 50S subunit in the 70S ribosome.

Functionally, located at the top of the head of the 30S subunit, it contacts several helices of the 16S rRNA. In the 70S ribosome it contacts the 23S rRNA (bridge B1a) and protein L5 of the 50S subunit (bridge B1b), connecting the 2 subunits; these bridges are implicated in subunit movement. Contacts the tRNAs in the A and P-sites. The protein is Small ribosomal subunit protein uS13 of Ehrlichia chaffeensis (strain ATCC CRL-10679 / Arkansas).